The chain runs to 623 residues: MMRGRSDGGLKKRLIASVCVVALFVCFLFMYYGSSSQGASALEYGRSLRKLGSSYLSGDDDNGDTKQDDSVANAEDSLVVAKSFPVCDDRHSEIIPCLDRNFIYQMRLKLDLSLMEHYERHCPPPERRFNCLIPPPSGYKVPIKWPKSRDEVWKANIPHTHLAKEKSDQNWMVEKGEKISFPGGGTHFHYGADKYIASIANMLNFSNDVLNDEGRLRTVLDVGCGVASFGAYLLASDIMTMSLAPNDVHQNQIQFALERGIPAYLGVLGTKRLPYPSRSFEFAHCSRCRIDWLQRDGLLLLELDRVLRPGGYFAYSSPEAYAQDEENLKIWKEMSALVERMCWRIAVKRNQTVVWQKPLSNDCYLEREPGTQPPLCRSDADPDAVAGVSMEACITPYSKHDHKTKGSGLAPWPARLTSSPPRLADFGYSTDMFEKDTELWKQQVDSYWNLMSSKVKSNTVRNIMDMKAHMGSFAAALKDKDVWVMNVVSPDGPNTLKLIYDRGLIGTNHNWCEAFSTYPRTYDLLHAWSIFSDIKSKGCSAEDLLIEMDRILRPTGFVIIRDKQSVVESIKKYLQALHWETVASEKVNTSSELDQDSEDGENNVVFIVQKKLWLTSESLRDSE.

Topologically, residues 1-13 (MMRGRSDGGLKKR) are cytoplasmic. The helical; Signal-anchor for type II membrane protein transmembrane segment at 14–34 (LIASVCVVALFVCFLFMYYGS) threads the bilayer. Residues 35-623 (SSQGASALEY…LTSESLRDSE (589 aa)) lie on the Lumenal side of the membrane. 3 N-linked (GlcNAc...) asparagine glycosylation sites follow: N204, N350, and N588.

It belongs to the methyltransferase superfamily.

It is found in the golgi apparatus membrane. The polypeptide is Probable methyltransferase PMT8 (Arabidopsis thaliana (Mouse-ear cress)).